The following is a 159-amino-acid chain: UPF0262 protein RD1_1069 (159 aa).

This sequence belongs to the UPF0262 family.

In Roseobacter denitrificans (strain ATCC 33942 / OCh 114) (Erythrobacter sp. (strain OCh 114)), this protein is UPF0262 protein RD1_1069.